A 94-amino-acid polypeptide reads, in one-letter code: Large ribosomal subunit protein eL42 (94 aa).

4 residues coordinate Zn(2+): C11, C14, C70, and C73. A C4-type zinc finger spans residues C11 to C73.

It belongs to the eukaryotic ribosomal protein eL42 family. Part of the 50S ribosomal subunit. Zn(2+) serves as cofactor.

Functionally, binds to the 23S rRNA. The sequence is that of Large ribosomal subunit protein eL42 from Methanocaldococcus jannaschii (strain ATCC 43067 / DSM 2661 / JAL-1 / JCM 10045 / NBRC 100440) (Methanococcus jannaschii).